Consider the following 420-residue polypeptide: L-cysteine:1D-myo-inositol 2-amino-2-deoxy-alpha-D-glucopyranoside ligase (420 aa).

Residue Cys-43 coordinates Zn(2+). Residues 43-46 (CGIT), Thr-58, and 81-83 (NIT) each bind L-cysteinyl-5'-AMP. Residues 45–55 (ITPYDATHLGH) carry the 'HIGH' region motif. Positions 187–192 (ERGGDP) match the 'ERGGDP' region motif. Trp-227 is a binding site for L-cysteinyl-5'-AMP. Cys-231 is a Zn(2+) binding site. L-cysteinyl-5'-AMP is bound at residue 249–251 (GSD). Zn(2+) is bound at residue His-256. Ile-289 contributes to the L-cysteinyl-5'-AMP binding site. A 'KMSKS' region motif is present at residues 295–299 (KMSKS).

It belongs to the class-I aminoacyl-tRNA synthetase family. MshC subfamily. In terms of assembly, monomer. It depends on Zn(2+) as a cofactor.

It catalyses the reaction 1D-myo-inositol 2-amino-2-deoxy-alpha-D-glucopyranoside + L-cysteine + ATP = 1D-myo-inositol 2-(L-cysteinylamino)-2-deoxy-alpha-D-glucopyranoside + AMP + diphosphate + H(+). Catalyzes the ATP-dependent condensation of GlcN-Ins and L-cysteine to form L-Cys-GlcN-Ins. The polypeptide is L-cysteine:1D-myo-inositol 2-amino-2-deoxy-alpha-D-glucopyranoside ligase (Segniliparus rotundus (strain ATCC BAA-972 / CDC 1076 / CIP 108378 / DSM 44985 / JCM 13578)).